We begin with the raw amino-acid sequence, 367 residues long: Alanine racemase (367 aa).

Residue lysine 40 is the Proton acceptor; specific for D-alanine of the active site. N6-(pyridoxal phosphate)lysine is present on lysine 40. Arginine 136 is a binding site for substrate. Tyrosine 263 (proton acceptor; specific for L-alanine) is an active-site residue. A substrate-binding site is contributed by methionine 310.

It belongs to the alanine racemase family. The cofactor is pyridoxal 5'-phosphate.

The enzyme catalyses L-alanine = D-alanine. The protein operates within amino-acid biosynthesis; D-alanine biosynthesis; D-alanine from L-alanine: step 1/1. In terms of biological role, catalyzes the interconversion of L-alanine and D-alanine. May also act on other amino acids. This Streptococcus pneumoniae (strain Taiwan19F-14) protein is Alanine racemase (alr).